Here is a 209-residue protein sequence, read N- to C-terminus: 2-phospho-L-lactate guanylyltransferase (209 aa).

The protein belongs to the CofC family. Homodimer.

The enzyme catalyses (2S)-2-phospholactate + GTP + H(+) = (2S)-lactyl-2-diphospho-5'-guanosine + diphosphate. The protein operates within cofactor biosynthesis; coenzyme F420 biosynthesis. In terms of biological role, guanylyltransferase that catalyzes the activation of (2S)-2-phospholactate (2-PL) as (2S)-lactyl-2-diphospho-5'-guanosine, via the condensation of 2-PL with GTP. It is involved in the biosynthesis of coenzyme F420, a hydride carrier cofactor. The polypeptide is 2-phospho-L-lactate guanylyltransferase (Methanosphaerula palustris (strain ATCC BAA-1556 / DSM 19958 / E1-9c)).